The sequence spans 357 residues: MEITWEKPKSSSHHRNPSFSSTLLDQIYRSIDDSSPPPPLESIKKKKHHHQQRNASLHEDREISPIYHRRSIAADFERSRRKTDFLRHSNSSSSDSSGFSSSESDSFHGRSKSSASPPSSSRQQPKPIRTSSVDHSSAVQKPKELGGFLRTKSKALKIYSDLKKVKQPISPGGRLATFLNSLFTNAATNPKKHKKTTTVAVVEEPHSSSTCSSASSFSRSCLSKTPSSSGKSKRSVRFCPVNVILDEDSSFTMPYAYNNERLYDNNEAKRVEEHRRVIQAAKDLLRTYHNKNKVTTTNINNVEEDDEDDAASCASSDLFELENLSAIGIERYREELPVYETTRLDNMNRVIATGLIV.

Disordered regions lie at residues 1–146 (MEIT…KELG) and 208–233 (SSTC…GKSK). Basic and acidic residues predominate over residues 75-87 (DFERSRRKTDFLR). Low complexity-rich tracts occupy residues 88–104 (HSNS…SSES) and 112–127 (KSSA…QPKP). A compositionally biased stretch (polar residues) spans 129–139 (RTSSVDHSSAV). Residues 208-223 (SSTCSSASSFSRSCLS) are compositionally biased toward low complexity.

This sequence belongs to the BIG GRAIN 1 (BG1) plant protein family.

Its subcellular location is the cell membrane. Involved in auxin transport. Regulator of the auxin signaling pathway. The polypeptide is Protein BIG GRAIN 1-like A (Arabidopsis thaliana (Mouse-ear cress)).